Here is a 73-residue protein sequence, read N- to C-terminus: MKFAIVITLLLVAFSAVALADKSIERAVMDLITARDDDCGKLFADCTSDSDCCENWVCSKTGFVKNICKYNFG.

Positions 1–20 are cleaved as a signal peptide; that stretch reads MKFAIVITLLLVAFSAVALA. A propeptide spanning residues 21–35 is cleaved from the precursor; the sequence is DKSIERAVMDLITAR. 3 disulfides stabilise this stretch: Cys39/Cys53, Cys46/Cys58, and Cys52/Cys68. Residue Phe72 is modified to Phenylalanine amide.

The protein belongs to the neurotoxin 10 (Hwtx-1) family. Expressed by the venom gland.

Its subcellular location is the secreted. In terms of biological role, insecticidal toxin that potently and irreversibly blocks voltage-gated sodium channels (Nav) in cockroach dorsal unpaired median (DUM) neurons (IC(50)=833.7 nM). It does not change both the steady-state activation and inactivation curves, suggesting it acts as a pore blocker (possibly at Nav site 1). Does not show toxicity when intraperitoneally injected into mouse. This Heteropoda venatoria (Brown huntsman spider) protein is Mu-sparatoxin-Hv2.